Reading from the N-terminus, the 236-residue chain is 15,16-dihydrobiliverdin:ferredoxin oxidoreductase (236 aa).

It belongs to the HY2 family.

The enzyme catalyses 15,16-dihydrobiliverdin + oxidized 2[4Fe-4S]-[ferredoxin] = biliverdin IXalpha + reduced 2[4Fe-4S]-[ferredoxin] + 2 H(+). Functionally, catalyzes the two-electron reduction of biliverdin IX-alpha at the C15 methine bridge. The sequence is that of 15,16-dihydrobiliverdin:ferredoxin oxidoreductase from Prochlorococcus marinus (strain MIT 9312).